A 118-amino-acid chain; its full sequence is DNA-directed RNA polymerase subunit omega (118 aa).

It belongs to the RNA polymerase subunit omega family. The RNAP catalytic core consists of 2 alpha, 1 beta, 1 beta' and 1 omega subunit. When a sigma factor is associated with the core the holoenzyme is formed, which can initiate transcription.

The catalysed reaction is RNA(n) + a ribonucleoside 5'-triphosphate = RNA(n+1) + diphosphate. Promotes RNA polymerase assembly. Latches the N- and C-terminal regions of the beta' subunit thereby facilitating its interaction with the beta and alpha subunits. The polypeptide is DNA-directed RNA polymerase subunit omega (Paracoccus denitrificans (strain Pd 1222)).